A 226-amino-acid polypeptide reads, in one-letter code: 2-C-methyl-D-erythritol 4-phosphate cytidylyltransferase (226 aa).

This sequence belongs to the IspD/TarI cytidylyltransferase family. IspD subfamily.

It catalyses the reaction 2-C-methyl-D-erythritol 4-phosphate + CTP + H(+) = 4-CDP-2-C-methyl-D-erythritol + diphosphate. The protein operates within isoprenoid biosynthesis; isopentenyl diphosphate biosynthesis via DXP pathway; isopentenyl diphosphate from 1-deoxy-D-xylulose 5-phosphate: step 2/6. Its function is as follows. Catalyzes the formation of 4-diphosphocytidyl-2-C-methyl-D-erythritol from CTP and 2-C-methyl-D-erythritol 4-phosphate (MEP). This chain is 2-C-methyl-D-erythritol 4-phosphate cytidylyltransferase, found in Haemophilus ducreyi (strain 35000HP / ATCC 700724).